The sequence spans 238 residues: Probable transcriptional regulatory protein VS_II1504 (238 aa).

The protein belongs to the TACO1 family.

Its subcellular location is the cytoplasm. The protein is Probable transcriptional regulatory protein VS_II1504 of Vibrio atlanticus (strain LGP32) (Vibrio splendidus (strain Mel32)).